Here is a 195-residue protein sequence, read N- to C-terminus: Imidazoleglycerol-phosphate dehydratase (195 aa).

This sequence belongs to the imidazoleglycerol-phosphate dehydratase family.

It localises to the cytoplasm. The catalysed reaction is D-erythro-1-(imidazol-4-yl)glycerol 3-phosphate = 3-(imidazol-4-yl)-2-oxopropyl phosphate + H2O. It participates in amino-acid biosynthesis; L-histidine biosynthesis; L-histidine from 5-phospho-alpha-D-ribose 1-diphosphate: step 6/9. The chain is Imidazoleglycerol-phosphate dehydratase from Aminomonas aminovorus.